Reading from the N-terminus, the 280-residue chain is 3,2-trans-enoyl-CoA isomerase (280 aa).

Residues 68–72 (SGADF) and L126 contribute to the substrate site. E158 acts as the Proton donor/acceptor in catalysis. A Microbody targeting signal motif is present at residues 278 to 280 (HRL).

This sequence belongs to the enoyl-CoA hydratase/isomerase family. As to quaternary structure, homohexamer, dimer of trimers. Interacts with DCI1.

The protein localises to the peroxisome. It catalyses the reaction a (3Z)-enoyl-CoA = a 4-saturated (2E)-enoyl-CoA. The catalysed reaction is a (3E)-enoyl-CoA = a 4-saturated (2E)-enoyl-CoA. It participates in lipid metabolism; fatty acid beta-oxidation. Its function is as follows. Essential for the beta oxidation of unsaturated fatty acids. The sequence is that of 3,2-trans-enoyl-CoA isomerase (ECI1) from Saccharomyces cerevisiae (strain ATCC 204508 / S288c) (Baker's yeast).